A 310-amino-acid polypeptide reads, in one-letter code: Malate dehydrogenase (310 aa).

Residues 7–13 (GAAGGIG) and D34 each bind NAD(+). The substrate site is built by R81 and R87. Residues N94 and 117 to 119 (ITN) each bind NAD(+). The substrate site is built by N119 and R153. The active-site Proton acceptor is the H177. NAD(+) is bound at residue M227.

Belongs to the LDH/MDH superfamily. MDH type 1 family. As to quaternary structure, homodimer.

It carries out the reaction (S)-malate + NAD(+) = oxaloacetate + NADH + H(+). Catalyzes the reversible oxidation of malate to oxaloacetate. The chain is Malate dehydrogenase from Vibrio vulnificus (strain CMCP6).